Consider the following 244-residue polypeptide: Adenosylcobinamide-GDP ribazoletransferase (244 aa).

Helical transmembrane passes span 31–51, 55–75, 109–129, 134–154, and 188–208; these read LLFY…ASHL, APAP…SGAL, IAVV…WVLV, GGWL…LFMG, and VVLG…VFLW.

It belongs to the CobS family. Mg(2+) is required as a cofactor.

Its subcellular location is the cell inner membrane. It carries out the reaction alpha-ribazole + adenosylcob(III)inamide-GDP = adenosylcob(III)alamin + GMP + H(+). It catalyses the reaction alpha-ribazole 5'-phosphate + adenosylcob(III)inamide-GDP = adenosylcob(III)alamin 5'-phosphate + GMP + H(+). The protein operates within cofactor biosynthesis; adenosylcobalamin biosynthesis; adenosylcobalamin from cob(II)yrinate a,c-diamide: step 7/7. Joins adenosylcobinamide-GDP and alpha-ribazole to generate adenosylcobalamin (Ado-cobalamin). Also synthesizes adenosylcobalamin 5'-phosphate from adenosylcobinamide-GDP and alpha-ribazole 5'-phosphate. The protein is Adenosylcobinamide-GDP ribazoletransferase of Pseudomonas entomophila (strain L48).